Here is a 1543-residue protein sequence, read N- to C-terminus: Rho guanine nucleotide exchange factor 12 (1543 aa).

The disordered stretch occupies residues 1-62 (MSGTQSTITD…KTKSSSEESR (62 aa)). N-acetylserine is present on serine 2. Residues 28 to 45 (SPTDKKQKVERSSSHDFD) are compositionally biased toward basic and acidic residues. At serine 41 the chain carries Phosphoserine. The region spanning 72–151 (CVIIQKDDNG…LTVQGRPPGS (80 aa)) is the PDZ domain. Residues 194–262 (VGEENNVVHN…LSKATGSAQD (69 aa)) are a coiled coil. Positions 281–355 (AEADPGDGLC…GAPHIIGAED (75 aa)) are disordered. Residues 293–312 (DWSSGDASRPSSDSADSPKS) are compositionally biased toward low complexity. Serine 309 carries the post-translational modification Phosphoserine. A compositionally biased stretch (basic and acidic residues) spans 313–329 (SLRERSYLEEAPERSEG). Residue serine 341 is modified to Phosphoserine. The 192-residue stretch at 367 to 558 (GQCSCFQSIE…LMYMKYLGVK (192 aa)) folds into the RGSL domain. The interval 574-710 (FLPKIKQSMK…DSTPRVPTTV (137 aa)) is disordered. Residues 582 to 592 (MKKDREGEEKG) show a composition bias toward basic and acidic residues. Serine 637 is modified (phosphoserine). Positions 663–676 (ASSMSSATSGTALS) are enriched in low complexity. Threonine 736 is subject to Phosphothreonine. The DH domain occupies 787-977 (KRQEVINELF…RQILNYVNQA (191 aa)). Residues 981-1004 (AENKQRLEDYQRRLDTSNLKLSEY) are a coiled coil. The region spanning 1019–1132 (KMIHEGPLVW…WQDLICRMAA (114 aa)) is the PH domain. Residues 1137–1158 (QSTKPIPLPQPPPCEGDNDEEE) are disordered. Serine 1288, serine 1327, and serine 1377 each carry phosphoserine. Disordered stretches follow at residues 1386 to 1405 (EAHSDDNPSEGDGAVKKEEK) and 1441 to 1468 (PVTGIPAVDSSHQQQHSPQNVHPEGPVS). A compositionally biased stretch (polar residues) spans 1450–1460 (SSHQQQHSPQN). Phosphoserine is present on residues serine 1457 and serine 1540.

Interacts with GNA12 and GNA13, probably through the RGS-like domain, with RHOA, PLXNB1 and PLXNB2, and through its PDZ domain with IGF1R beta subunit. Interacts with GCSAM. Found in a complex with ARHGEF11 and ARHGEF12; binding to ARHGEF11 and ARHGEF12 enhances CDC42 GEF activity of PLEKHG4B, and PLEKHG4B, in turn, inhibits ARHGEF11- and ARHGEF12-mediated RHOA activation. As to expression, expressed in brain, predominantly in neuronal cell bodies.

Its subcellular location is the cytoplasm. It localises to the membrane. Its function is as follows. May play a role in the regulation of RhoA GTPase by guanine nucleotide-binding alpha-12 (GNA12) and alpha-13 (GNA13). Acts as guanine nucleotide exchange factor (GEF) for RhoA GTPase and may act as GTPase-activating protein (GAP) for GNA12 and GNA13. This is Rho guanine nucleotide exchange factor 12 (Arhgef12) from Mus musculus (Mouse).